Here is a 239-residue protein sequence, read N- to C-terminus: Proteasome activator complex subunit 2 (239 aa).

A2 carries the post-translational modification N-acetylalanine. Position 10 is a phosphoserine (S10). Residues 65–86 (DIPIPDPPPKDDEMETDKQEKK) form a disordered region. The span at 72 to 86 (PPKDDEMETDKQEKK) shows a compositional bias: basic and acidic residues.

The protein belongs to the PA28 family. In terms of assembly, heterodimer of PSME1 and PSME2, which forms a hexameric ring.

In terms of biological role, implicated in immunoproteasome assembly and required for efficient antigen processing. The PA28 activator complex enhances the generation of class I binding peptides by altering the cleavage pattern of the proteasome. The polypeptide is Proteasome activator complex subunit 2 (PSME2) (Sus scrofa (Pig)).